The sequence spans 350 residues: Ion-translocating oxidoreductase complex subunit D (350 aa).

The next 4 membrane-spanning stretches (helical) occupy residues 20 to 40, 42 to 62, 89 to 109, and 123 to 143; these read IMLL…WFFG, GTVL…AAIL, IPPL…VVIA, and PAMI…TSWL. Thr-187 is modified (FMN phosphoryl threonine). The next 5 helical transmembrane spans lie at 214–234, 242–262, 267–287, 301–321, and 322–342; these read VLAG…GLFL, WHIP…GWLF, LASP…FFIL, LIFG…GGYP, and DGVA…DYYT.

This sequence belongs to the NqrB/RnfD family. In terms of assembly, the complex is composed of six subunits: RnfA, RnfB, RnfC, RnfD, RnfE and RnfG. Requires FMN as cofactor.

It is found in the cell inner membrane. In terms of biological role, part of a membrane-bound complex that couples electron transfer with translocation of ions across the membrane. The chain is Ion-translocating oxidoreductase complex subunit D from Klebsiella pneumoniae (strain 342).